The following is a 981-amino-acid chain: Proline-rich transmembrane protein 3 (981 aa).

An N-terminal signal peptide occupies residues 1–27 (MASSPWGCVCGLLLLLLPLLGTGPALG). Over 28–474 (RGFPRPLENS…RVLSFSWELH (447 aa)) the chain is Extracellular. 2 disordered regions span residues 43–107 (PGAH…GAQR) and 169–457 (PPSL…TAPP). The span at 65–85 (PRADSHRNSDVRHAPAEEMPE) shows a compositional bias: basic and acidic residues. Residues 297 to 302 (SWEVSS) form an O-glycosylated at one site region. A glycan (O-linked (GalNAc...) serine) is linked at Ser329. Over residues 331 to 340 (APDRPSKPER) the composition is skewed to basic and acidic residues. Thr363 carries an O-linked (GalNAc...) threonine glycan. A glycan (N-linked (GlcNAc...) asparagine) is linked at Asn379. Polar residues predominate over residues 411-427 (APSTSRRGLIRVTTQRA). Residues 437–457 (TASSMASAPASSPPANATAPP) show a composition bias toward low complexity. A helical transmembrane segment spans residues 475-495 (VYGVGVLFLLPALLALAALAA). Residues 496 to 501 (APAGPR) are Cytoplasmic-facing. The helical transmembrane segment at 502–522 (LALVAAVLVLVASALRSAYML) threads the bilayer. Over 523–542 (TDPYGSQARLGVRGGLVLYN) the chain is Extracellular. A helical transmembrane segment spans residues 543-563 (LPFPLLLTALAALTLLGLGAG). Residues 564 to 570 (LPPPLQN) lie on the Cytoplasmic side of the membrane. The chain crosses the membrane as a helical span at residues 571–591 (PLLLGAVALVHGVGLLATDLL). Topologically, residues 592–598 (STWSVLN) are extracellular. A helical membrane pass occupies residues 599 to 619 (LLTQGLSCAWGAAVALGTLCL). Residues 620-638 (CRRRLLDGPRGWDASPGPR) lie on the Cytoplasmic side of the membrane. Residues 639-659 (LLAVAGALGLLASGLQLAAAL) traverse the membrane as a helical segment. The Extracellular portion of the chain corresponds to 660-679 (WLYPGPGRVGRFSWAWWGVH). The chain crosses the membrane as a helical span at residues 680–700 (FWLRLLELTWALALALAAVAA). Topologically, residues 701–981 (ARPRPPTEHA…RSASSDTIEL (281 aa)) are cytoplasmic. The disordered stretch occupies residues 759-807 (AESGQLATPSSGAWGSAASLGRGPQGGPGLSRNGVGPAPSLSELDLRPP). Residues 765 to 780 (ATPSSGAWGSAASLGR) are compositionally biased toward low complexity. Residue Ser777 is modified to Phosphoserine. Arg780 is subject to Omega-N-methylarginine. Ser789, Ser798, Ser808, Ser815, Ser854, Ser874, Ser902, Ser903, and Ser911 each carry phosphoserine. Residues 836–865 (LRGLASPPPGGALRPRRGSHPKAELDDAGS) form a disordered region. The segment at 937–981 (TVQLLPAPTPAPDSTAARQGDGQGEVQPRGKPGESRSASSDTIEL) is disordered. Positions 972 to 981 (RSASSDTIEL) are enriched in polar residues.

It localises to the membrane. This is Proline-rich transmembrane protein 3 (PRRT3) from Homo sapiens (Human).